A 1763-amino-acid chain; its full sequence is Collagen alpha-2(IV) chain (1763 aa).

The signal sequence occupies residues 1 to 26; the sequence is MSSRLRIPLWLLLPTTALVYFVTTVS. Residues 27–42 form a 7S domain region; that stretch reads TQITCRDCTNRGCFCV. The segment at 43 to 1529 is triple-helical region; it reads GEKGSMGIPG…SGPPGPPGPS (1487 aa). 2 disordered regions span residues 51–529 and 550–1529; these read PGPQ…PGPK and AGYA…PGPS. Positions 72-81 are enriched in low complexity; sequence PGPKGQKGSQ. N126 carries N-linked (GlcNAc...) asparagine glycosylation. A compositionally biased stretch (pro residues) spans 135-152; the sequence is PGLPGPPGMPGFPGPPGV. Residues 190-199 show a composition bias toward basic and acidic residues; the sequence is FPGEKGDRGD. Residues 206–217 are compositionally biased toward pro residues; the sequence is RGPPGEAGPPGN. Residues 225–235 show a composition bias toward low complexity; that stretch reads PKGDPGEQGPR. O-linked (Xyl...) (glycosaminoglycan) serine glycosylation occurs at A249. Positions 326–335 are enriched in low complexity; that stretch reads DGLPGVPGLP. The span at 400 to 409 shows a compositional bias: gly residues; the sequence is GLPGGPGLPG. 2 stretches are compositionally biased toward low complexity: residues 410–419 and 428–453; these read LPGLEGLPGP and IPGA…PGPR. Over residues 466–481 the composition is skewed to basic and acidic residues; it reads KDGRPGLDGLPGRKGE. The span at 564–582 shows a compositional bias: low complexity; it reads LPGIPGATGAPGDDGLPGA. A compositionally biased stretch (pro residues) spans 583-592; it reads PGRPGPPGPP. Low complexity-rich tracts occupy residues 699–714 and 731–783; these read DAGL…AVGP and KDGL…PGIP. Positions 810-832 are enriched in pro residues; sequence PGLPGPKGEPGPSTTGPPGPPGF. Composition is skewed to low complexity over residues 865 to 895, 946 to 977, 1040 to 1051, 1077 to 1086, 1108 to 1146, 1210 to 1231, 1280 to 1296, 1367 to 1386, 1462 to 1480, and 1499 to 1510; these read EIGL…KEGP, FPGQ…PGQK, PGLPGQPGLRGP, LMGEKGLPGL, PGLK…QPGL, PGFP…PGPR, LPGL…PGLK, PAGL…PGFP, LPGL…FAGA, and PGLPGFPGIEGI. Positions 1511 to 1528 are enriched in pro residues; sequence PGPPGLPGPSGPPGPPGP. Positions 1533 to 1756 constitute a Collagen IV NC1 domain; that stretch reads GFLLVKHSQT…SRCQVCIRSP (224 aa). 6 cysteine pairs are disulfide-bonded: C1548–C1637, C1581–C1634, C1593–C1599, C1656–C1752, C1690–C1749, and C1702–C1709.

Belongs to the type IV collagen family. Trimers of two alpha 1(IV) and one alpha 2(IV) chain. Type IV collagen forms a mesh-like network linked through intermolecular interactions between 7S domains and between NC1 domains. Prolines at the third position of the tripeptide repeating unit (G-X-Y) are hydroxylated in some or all of the chains. Post-translationally, type IV collagens contain numerous cysteine residues which are involved in inter- and intramolecular disulfide bonding. 12 of these, located in the NC1 domain, are conserved in all known type IV collagens. In terms of processing, the trimeric structure of the NC1 domains is stabilized by covalent bonds between Lys and Met residues.

The protein localises to the secreted. It localises to the extracellular space. The protein resides in the extracellular matrix. Its subcellular location is the basement membrane. Its function is as follows. Collagen type IV is specific for basement membranes. This Ascaris suum (Pig roundworm) protein is Collagen alpha-2(IV) chain.